Reading from the N-terminus, the 340-residue chain is L-threonine 3-dehydrogenase (340 aa).

Cys38 is a Zn(2+) binding site. Catalysis depends on charge relay system residues Thr40 and His43. Zn(2+)-binding residues include His63, Glu64, Cys93, Cys96, Cys99, and Cys107. Residues Ile175, Asp195, Arg200, 262–264 (LGI), and 286–287 (IY) contribute to the NAD(+) site.

Belongs to the zinc-containing alcohol dehydrogenase family. As to quaternary structure, homotetramer. The cofactor is Zn(2+).

Its subcellular location is the cytoplasm. The enzyme catalyses L-threonine + NAD(+) = (2S)-2-amino-3-oxobutanoate + NADH + H(+). It participates in amino-acid degradation; L-threonine degradation via oxydo-reductase pathway; glycine from L-threonine: step 1/2. In terms of biological role, catalyzes the NAD(+)-dependent oxidation of L-threonine to 2-amino-3-ketobutyrate. This is L-threonine 3-dehydrogenase from Pseudoalteromonas atlantica (strain T6c / ATCC BAA-1087).